The primary structure comprises 137 residues: ATP synthase epsilon chain 1 (137 aa).

It belongs to the ATPase epsilon chain family. As to quaternary structure, F-type ATPases have 2 components, CF(1) - the catalytic core - and CF(0) - the membrane proton channel. CF(1) has five subunits: alpha(3), beta(3), gamma(1), delta(1), epsilon(1). CF(0) has three main subunits: a, b and c.

The protein localises to the cell inner membrane. Produces ATP from ADP in the presence of a proton gradient across the membrane. This is ATP synthase epsilon chain 1 (atpC1) from Ralstonia nicotianae (strain ATCC BAA-1114 / GMI1000) (Ralstonia solanacearum).